We begin with the raw amino-acid sequence, 306 residues long: Thiamine-monophosphate kinase (306 aa).

The Mg(2+) site is built by D27, T41, T42, and D43. Position 50 (H50) interacts with substrate. D71 contacts Mg(2+). ATP is bound by residues Y101, 118-119 (GN), and R142. N119 serves as a coordination point for Mg(2+). D207 lines the Mg(2+) pocket. S209 provides a ligand contact to ATP. Position 210 (D210) interacts with Mg(2+). The substrate site is built by E260 and W303.

The protein belongs to the thiamine-monophosphate kinase family. Homodimer.

It catalyses the reaction thiamine phosphate + ATP = thiamine diphosphate + ADP. Its pathway is cofactor biosynthesis; thiamine diphosphate biosynthesis; thiamine diphosphate from thiamine phosphate: step 1/1. In terms of biological role, catalyzes the ATP-dependent phosphorylation of thiamine-monophosphate (TMP) to form thiamine-pyrophosphate (TPP), the active form of vitamin B1. This chain is Thiamine-monophosphate kinase (thiL), found in Aquifex aeolicus (strain VF5).